The primary structure comprises 337 residues: MIPLRLLFSTSYNPWFNLSLEEYIFKNMDQNQTILFLWRNQNTIVIGRSQNAWKECNTRRMNRDGVKLARRHSGGGAVFHDLGNTCFTFMSTQKNYNKNVSFKIILDGLNSLNISAKISGRNDLIINTNQGDRKISGSAYRQVSDRQLHHGTLLLNVDINKLSYYLNPDSKKLKSKGITSVNSRIINLNTLHANITHDLVCNQLKTAFFNYYQTTVESEIISIKNFNHIKDFSKQFNKQRSWQWNFGNTPSFSHYLDNRFNWGSVELHFDISHGMINRSHIFTDSLNPEPLEELSKKLIGISYNAVTIQHCCQEWTKNWPQFQELQEVTHWLITNVT.

A BPL/LPL catalytic domain is found at 29–216; it reads DQNQTILFLW…AFFNYYQTTV (188 aa). ATP is bound by residues arginine 71, 76–79, and lysine 134; that span reads GAVF. Position 134 (lysine 134) interacts with (R)-lipoate.

This sequence belongs to the LplA family. In terms of assembly, monomer.

The protein resides in the cytoplasm. It catalyses the reaction L-lysyl-[lipoyl-carrier protein] + (R)-lipoate + ATP = N(6)-[(R)-lipoyl]-L-lysyl-[lipoyl-carrier protein] + AMP + diphosphate + H(+). Its pathway is protein modification; protein lipoylation via exogenous pathway; protein N(6)-(lipoyl)lysine from lipoate: step 1/2. It participates in protein modification; protein lipoylation via exogenous pathway; protein N(6)-(lipoyl)lysine from lipoate: step 2/2. Catalyzes both the ATP-dependent activation of exogenously supplied lipoate to lipoyl-AMP and the transfer of the activated lipoyl onto the lipoyl domains of lipoate-dependent enzymes. In Blochmanniella floridana, this protein is Lipoate-protein ligase A.